Reading from the N-terminus, the 451-residue chain is Adenylyltransferase and sulfurtransferase MOCS3-1 (451 aa).

The segment at 42–62 (GEDSDEAEESSNDMPTPQTKL) is disordered. Acidic residues predominate over residues 43-52 (EDSDEAEESS). Thr60 is subject to Phosphothreonine. ATP-binding positions include Gly99, Asp120, 127–131 (SNLHR), Lys144, and 188–189 (DN). Cys229 and Cys232 together coordinate Zn(2+). Cys246 (glycyl thioester intermediate; for adenylyltransferase activity) is an active-site residue. The Zn(2+) site is built by Cys304 and Cys307. Positions 353–449 (QSQPHLLLDV…WTGSVDATFP (97 aa)) constitute a Rhodanese domain. The active-site Cysteine persulfide intermediate; for sulfurtransferase activity is the Cys408.

It in the N-terminal section; belongs to the HesA/MoeB/ThiF family. UBA4 subfamily. The cofactor is Zn(2+).

It localises to the cytoplasm. The enzyme catalyses [molybdopterin-synthase sulfur-carrier protein]-C-terminal Gly-Gly + ATP + H(+) = [molybdopterin-synthase sulfur-carrier protein]-C-terminal Gly-Gly-AMP + diphosphate. It catalyses the reaction [molybdopterin-synthase sulfur-carrier protein]-C-terminal Gly-Gly-AMP + S-sulfanyl-L-cysteinyl-[cysteine desulfurase] + AH2 = [molybdopterin-synthase sulfur-carrier protein]-C-terminal-Gly-aminoethanethioate + L-cysteinyl-[cysteine desulfurase] + A + AMP + 2 H(+). It participates in tRNA modification; 5-methoxycarbonylmethyl-2-thiouridine-tRNA biosynthesis. The protein operates within cofactor biosynthesis; molybdopterin biosynthesis. Plays a central role in 2-thiolation of mcm(5)S(2)U at tRNA wobble positions of cytosolic tRNA(Lys), tRNA(Glu) and tRNA(Gln). Also essential during biosynthesis of the molybdenum cofactor. Acts by mediating the C-terminal thiocarboxylation of sulfur carriers URM1 and MOCS2A. Its N-terminus first activates URM1 and MOCS2A as acyl-adenylates (-COAMP), then the persulfide sulfur on the catalytic cysteine is transferred to URM1 and MOCS2A to form thiocarboxylation (-COSH) of their C-terminus. The reaction probably involves hydrogen sulfide that is generated from the persulfide intermediate and that acts as a nucleophile towards URM1 and MOCS2A. Subsequently, a transient disulfide bond is formed. Does not use thiosulfate as sulfur donor; NFS1 probably acting as a sulfur donor for thiocarboxylation reactions. This Drosophila pseudoobscura pseudoobscura (Fruit fly) protein is Adenylyltransferase and sulfurtransferase MOCS3-1.